The chain runs to 905 residues: DNA mismatch repair protein MutS (905 aa).

A disordered region spans residues 1 to 95; it reads MELSLQGSLF…PAWGHHSQLK (95 aa). Positions 38 to 50 are enriched in basic and acidic residues; sequence NLSDADLSKDALA. Position 721–728 (721–728) interacts with ATP; the sequence is GPNASGKS.

It belongs to the DNA mismatch repair MutS family.

In terms of biological role, this protein is involved in the repair of mismatches in DNA. It is possible that it carries out the mismatch recognition step. This protein has a weak ATPase activity. The polypeptide is DNA mismatch repair protein MutS (Synechococcus sp. (strain CC9902)).